A 293-amino-acid chain; its full sequence is Acidic endochitinase (293 aa).

Positions 1 to 22 (MEKCFNIIPSLLLISLLIKSSN) are cleaved as a signal peptide. Positions 24–293 (AGIAVYWGQN…GYSNAIKGSV (270 aa)) constitute a GH18 domain. Disulfide bonds link C43/C90 and C73/C80. E150 acts as the Proton donor in catalysis. A disulfide bond links C179 and C208.

It belongs to the glycosyl hydrolase 18 family. Chitinase class II subfamily.

It is found in the secreted. It localises to the extracellular space. It catalyses the reaction Random endo-hydrolysis of N-acetyl-beta-D-glucosaminide (1-&gt;4)-beta-linkages in chitin and chitodextrins.. Its function is as follows. This protein functions as a defense against chitin containing fungal pathogens. The polypeptide is Acidic endochitinase (Cicer arietinum (Chickpea)).